The primary structure comprises 1573 residues: Synaptojanin-1 (1573 aa).

Residues 119–442 (VRKVLNSGNF…GDSISKIYAG (324 aa)) form the SAC domain. The tract at residues 500-899 (GSLRVSEQTL…GPPDGTVLVS (400 aa)) is catalytic. Phosphoserine is present on residues serine 820 and serine 830. Residues 902-971 (SSLPENNFFD…RTITIALKSP (70 aa)) form the RRM domain. The segment covering 1029–1054 (HLQPSSSSGLGTSPSSSPRTSPCQSP) has biased composition (low complexity). Disordered stretches follow at residues 1029–1322 (HLQP…PLKI), 1341–1360 (SVQT…QLPS), 1370–1463 (VSCM…GFKD), and 1535–1573 (SRRP…FTER). Serine 1053 bears the Phosphoserine mark. Pro residues predominate over residues 1108-1130 (PPPPRPVAPPTRPAPPQRPPPPS). Phosphoserine occurs at positions 1150 and 1178. Arginine 1201 carries the post-translational modification Omega-N-methylarginine. The residue at position 1220 (threonine 1220) is a Phosphothreonine. The span at 1221–1234 (PESQSKTSETSKGS) shows a compositional bias: polar residues. Position 1292 is a phosphoserine (serine 1292). The span at 1293–1304 (SHSLPSEASSQP) shows a compositional bias: low complexity. Positions 1313–1322 (DGKRESPLKI) are enriched in basic and acidic residues. A phosphoserine mark is found at serine 1318 and serine 1345. A Phosphothreonine modification is found at threonine 1349. Residues 1382–1407 (RSQSQENMRSSPNPFITGLTRTNPFS) show a composition bias toward polar residues. Repeat copies occupy residues 1396–1398 (FIT), 1406–1408 (FSD), and 1417–1419 (FRA). Residues 1396–1419 (FITGLTRTNPFSDRTAAPGNPFRA) are 3 X 3 AA repeats of N-P-F. Pro residues predominate over residues 1536-1555 (RRPPPPPVPLLPPGTSPPVD). Phosphoserine is present on residues serine 1551 and serine 1565.

Belongs to the synaptojanin family. It in the central section; belongs to the inositol 1,4,5-trisphosphate 5-phosphatase family. Interacts with ASH/GRB2. Interacts with PACSIN1, PACSIN2 and PACSIN3. Interacts with AMPH, SH3GL1, SH3GL2 and SH3GL3. Interacts with MYO1E (via SH3 domain). Interacts with BIN1 and DNM1. Interacts with EPS15.

The protein localises to the cytoplasm. The protein resides in the perinuclear region. It carries out the reaction a 1,2-diacyl-sn-glycero-3-phospho-(1D-myo-inositol-4,5-bisphosphate) + H2O = a 1,2-diacyl-sn-glycero-3-phospho-(1D-myo-inositol 4-phosphate) + phosphate. Phosphatase that acts on various phosphoinositides, including phosphatidylinositol 4-phosphate, phosphatidylinositol (4,5)-bisphosphate and phosphatidylinositol (3,4,5)-trisphosphate. Has a role in clathrin-mediated endocytosis. Hydrolyzes PIP2 bound to actin regulatory proteins resulting in the rearrangement of actin filaments downstream of tyrosine kinase and ASH/GRB2. The sequence is that of Synaptojanin-1 (SYNJ1) from Homo sapiens (Human).